The primary structure comprises 110 residues: Glutaredoxin-2 (110 aa).

The Glutaredoxin domain maps to K6 to K106. C26 and C29 are oxidised to a cystine.

Belongs to the glutaredoxin family.

In terms of biological role, the disulfide bond functions as an electron carrier in the glutathione-dependent synthesis of deoxyribonucleotides by the enzyme ribonucleotide reductase. In addition, it is also involved in reducing some disulfides in a coupled system with glutathione reductase. Thioltransferase catalyzes cellular thiol-disulfide transhydrogenation reactions. It transfers reducing equivalents to cytosolic protein and nonprotein disulfides. This Schizosaccharomyces pombe (strain 972 / ATCC 24843) (Fission yeast) protein is Glutaredoxin-2 (grx2).